Reading from the N-terminus, the 110-residue chain is HTH-type transcriptional regulator TnrA (110 aa).

Residues 13–81 (VISIGIVSEL…TAEILKDMRK (69 aa)) enclose the HTH merR-type domain. Positions 16–35 (IGIVSELTGLSVRQIRYYEE) form a DNA-binding region, H-T-H motif.

Homodimer. Under conditions of nitrogen excess, TnrA forms a stable complex with feedback-inhibited GlnA. Interacts with GlnK-AmtB complex.

It localises to the cell membrane. Under conditions of nitrogen excess, the DNA-binding activity is inhibited by the formation of a stable complex with feedback-inhibited GlnA. The presence of glutamine and AMP increases the inhibitory activity of glutamine synthetase by more than 1000-fold. Its function is as follows. Transcription regulator that actives the transcription of genes required for nitrogen assimilation such as nrgAB (ammonium transport), nasABCDEF (nitrate/nitrite assimilation), ureABC (urea degradation) and gabP (GABA transport), during nitrogen limitation. Also represses glnRA and gltAB in the absence of ammonium. On the contrary of the MerR members, which require longer DNA sites for high-affinity binding, TnrA requires a DNA sequence of 17 nucleotides as minimal binding site. This chain is HTH-type transcriptional regulator TnrA, found in Bacillus subtilis (strain 168).